The following is a 122-amino-acid chain: MIQVQTILKAADNTGARKLMCIRVMGGSLRRYASVGDIIVASVKEATPGGVVKKGDVVKCVVVRTSKEVRRPDGSYIKFDENAAVVIKDDKTPRGTRIFGPVARELREKDFMKIVSLAPEVI.

The protein belongs to the universal ribosomal protein uL14 family. In terms of assembly, part of the 50S ribosomal subunit. Forms a cluster with proteins L3 and L19. In the 70S ribosome, L14 and L19 interact and together make contacts with the 16S rRNA in bridges B5 and B8.

Binds to 23S rRNA. Forms part of two intersubunit bridges in the 70S ribosome. In Desulforamulus reducens (strain ATCC BAA-1160 / DSM 100696 / MI-1) (Desulfotomaculum reducens), this protein is Large ribosomal subunit protein uL14.